The chain runs to 35 residues: TATCAGQDKPCQKHCDCCGPKGECVCEGPCICRQG.

4 cysteine pairs are disulfide-bonded: C4–C18, C11–C24, C17–C32, and C26–C30.

As to expression, expressed by the venom gland.

It localises to the secreted. In terms of biological role, blocks voltage-gated sodium channels (Nav). In Ctenus ornatus (Brazilian spider), this protein is U5-ctenitoxin-Co1a.